A 208-amino-acid polypeptide reads, in one-letter code: Large ribosomal subunit protein bL25 (208 aa).

The tract at residues 1-21 (MSNEFSLNAEKRDVQGKGASR) is disordered.

Belongs to the bacterial ribosomal protein bL25 family. CTC subfamily. In terms of assembly, part of the 50S ribosomal subunit; part of the 5S rRNA/L5/L18/L25 subcomplex. Contacts the 5S rRNA. Binds to the 5S rRNA independently of L5 and L18.

Functionally, this is one of the proteins that binds to the 5S RNA in the ribosome where it forms part of the central protuberance. This chain is Large ribosomal subunit protein bL25, found in Hahella chejuensis (strain KCTC 2396).